We begin with the raw amino-acid sequence, 226 residues long: LysM and putative peptidoglycan-binding domain-containing protein 1 (226 aa).

2 positions are modified to phosphoserine: serine 23 and serine 33. The LysM domain occupies 40 to 84 (LEHQLEPGDTLAGLALKYGVTMEQIKRTNRLYTNDSIFLKKTLYI). A disordered region spans residues 95–156 (NGLDSEEEND…PSHDLSASDF (62 aa)). Over residues 98 to 107 (DSEEENDGEE) the composition is skewed to acidic residues. Serine 99 bears the Phosphoserine mark. The segment covering 142-151 (QETSTPSHDL) has biased composition (polar residues). Phosphoserine occurs at positions 165, 180, 193, and 211. The disordered stretch occupies residues 170–226 (AAAQKLRKGESGVPEEDTGLYPSSPRMQQRAVLGPVPLTRTSRTQTLRDQEDEIFKL). Basic and acidic residues predominate over residues 215–226 (TLRDQEDEIFKL).

The sequence is that of LysM and putative peptidoglycan-binding domain-containing protein 1 (Lysmd1) from Mus musculus (Mouse).